The sequence spans 193 residues: Protein hunchback (193 aa).

Positions 18-31 are enriched in basic residues; it reads HLHHHHAHHSHHRH. Disordered regions lie at residues 18–57 and 153–193; these read HLHH…SNTN and LTPP…KYMA. The span at 34–44 shows a compositional bias: low complexity; the sequence is NSNSNASSPHQ. Residues 174-193 show a composition bias toward basic and acidic residues; it reads EPEKEHDLMSNSSEDMKYMA.

This sequence belongs to the hunchback C2H2-type zinc-finger protein family.

Its subcellular location is the nucleus. In terms of biological role, gap class segmentation protein that controls development of head structures. This Drosophila petalopeza (Fruit fly) protein is Protein hunchback (hb).